Consider the following 61-residue polypeptide: Large ribosomal subunit protein bL32 (61 aa).

A compositionally biased stretch (basic residues) spans 1–22 (MAVPKKKTSRARRDRRRSHHAL). The tract at residues 1-24 (MAVPKKKTSRARRDRRRSHHALRG) is disordered.

Belongs to the bacterial ribosomal protein bL32 family.

This is Large ribosomal subunit protein bL32 from Rubrobacter xylanophilus (strain DSM 9941 / JCM 11954 / NBRC 16129 / PRD-1).